The following is a 489-amino-acid chain: Cysteine--tRNA ligase (489 aa).

C27 contributes to the Zn(2+) binding site. Positions 29–39 (VTVYDLCHLGH) match the 'HIGH' region motif. Zn(2+) is bound by residues C211, H236, and E240. A 'KMSKS' region motif is present at residues 268 to 272 (KMSKS). K271 is an ATP binding site.

This sequence belongs to the class-I aminoacyl-tRNA synthetase family. As to quaternary structure, monomer. The cofactor is Zn(2+).

It is found in the cytoplasm. It catalyses the reaction tRNA(Cys) + L-cysteine + ATP = L-cysteinyl-tRNA(Cys) + AMP + diphosphate. In Prochlorococcus marinus (strain MIT 9215), this protein is Cysteine--tRNA ligase.